The chain runs to 420 residues: Ammonium transporter Amt2 (420 aa).

A run of 11 helical transmembrane segments spans residues 34–54, 71–91, 120–140, 149–169, 180–200, 220–240, 250–270, 273–293, 295–315, 339–359, and 365–385; these read VFFLVVMGVLVFMMQWGFAML, NMVDWLIGCVAWLFIGGILCS, SWFFGLVFCATAATIVSGGVA, VLISLIITGLLYPLFVYLGPW, AGSLVVHGLGGFLALGAIAAL, IPMAVFGAFALAIGWYGFNVG, GLVCATTTMAMAGGGIGALIA, NDVLFTANGIVAGLVAICSGT, VVSPIGGLIIGLIAGLQVPIV, VIGAILTGILGLKIFGGAGGV, and IIGAVFCIIYGTGLGYILAKI.

Belongs to the ammonia transporter channel (TC 1.A.11.2) family. Homotrimer. Interacts and forms a complex with GlnK2.

Its subcellular location is the cell membrane. In terms of biological role, involved in the uptake of ammonium/ammonia (NH(4)(+)/NH(3)). Transport is electrogenic. This chain is Ammonium transporter Amt2, found in Methanocaldococcus jannaschii (strain ATCC 43067 / DSM 2661 / JAL-1 / JCM 10045 / NBRC 100440) (Methanococcus jannaschii).